Here is an 85-residue protein sequence, read N- to C-terminus: Large ribosomal subunit protein bL31 (85 aa).

Residues 65–85 form a disordered region; the sequence is YGMGGAGKAGEDKKAGDKADA. The segment covering 73–85 has biased composition (basic and acidic residues); sequence AGEDKKAGDKADA.

It belongs to the bacterial ribosomal protein bL31 family. Type A subfamily. In terms of assembly, part of the 50S ribosomal subunit.

In terms of biological role, binds the 23S rRNA. The protein is Large ribosomal subunit protein bL31 of Synechococcus sp. (strain WH7803).